A 96-amino-acid chain; its full sequence is Co-chaperonin GroES (96 aa).

It belongs to the GroES chaperonin family. In terms of assembly, heptamer of 7 subunits arranged in a ring. Interacts with the chaperonin GroEL.

It is found in the cytoplasm. Its function is as follows. Together with the chaperonin GroEL, plays an essential role in assisting protein folding. The GroEL-GroES system forms a nano-cage that allows encapsulation of the non-native substrate proteins and provides a physical environment optimized to promote and accelerate protein folding. GroES binds to the apical surface of the GroEL ring, thereby capping the opening of the GroEL channel. This chain is Co-chaperonin GroES, found in Wolbachia sp. subsp. Brugia malayi (strain TRS).